A 189-amino-acid chain; its full sequence is Cancer/testis antigen family 45 member A5 (189 aa).

Residues 1–23 are compositionally biased toward basic and acidic residues; sequence MTDKTEKVAVDPETVFKRPRECD. 2 disordered regions span residues 1 to 27 and 82 to 118; these read MTDK…SPSY and DGMM…SPKS.

The protein belongs to the CT45 family. In terms of tissue distribution, testis specific. Expressed in cancer cell lines.

The protein localises to the nucleus. This Homo sapiens (Human) protein is Cancer/testis antigen family 45 member A5.